Reading from the N-terminus, the 317-residue chain is Beta-ketoacyl-[acyl-carrier-protein] synthase III (317 aa).

Active-site residues include cysteine 112 and histidine 244. The segment at 245–249 is ACP-binding; the sequence is QANIR. Asparagine 274 is a catalytic residue.

This sequence belongs to the thiolase-like superfamily. FabH family. As to quaternary structure, homodimer.

The protein localises to the cytoplasm. The enzyme catalyses malonyl-[ACP] + acetyl-CoA + H(+) = 3-oxobutanoyl-[ACP] + CO2 + CoA. It participates in lipid metabolism; fatty acid biosynthesis. Functionally, catalyzes the condensation reaction of fatty acid synthesis by the addition to an acyl acceptor of two carbons from malonyl-ACP. Catalyzes the first condensation reaction which initiates fatty acid synthesis and may therefore play a role in governing the total rate of fatty acid production. Possesses both acetoacetyl-ACP synthase and acetyl transacylase activities. Its substrate specificity determines the biosynthesis of branched-chain and/or straight-chain of fatty acids. The polypeptide is Beta-ketoacyl-[acyl-carrier-protein] synthase III (Rickettsia prowazekii (strain Madrid E)).